Here is a 385-residue protein sequence, read N- to C-terminus: Glucans biosynthesis protein C (385 aa).

Helical transmembrane passes span 17–37, 60–80, 91–111, 137–157, 173–193, 212–232, 239–259, 274–294, 311–331, and 338–358; these read AWLM…SHTW, MQVF…RYPL, VGIP…IMLQ, ISHL…VWIF, KFSM…YAVI, FIVM…LAFI, LFTT…VAYL, TESV…FSFG, ASLF…AYIT, and WLGF…LYEI.

It belongs to the acyltransferase 3 family. OpgC subfamily.

Its subcellular location is the cell membrane. The protein operates within glycan metabolism; osmoregulated periplasmic glucan (OPG) biosynthesis. Necessary for the succinyl substitution of periplasmic glucans. Could catalyze the transfer of succinyl residues from the cytoplasmic side of the membrane to the nascent glucan backbones on the periplasmic side of the membrane. This chain is Glucans biosynthesis protein C, found in Escherichia coli O45:K1 (strain S88 / ExPEC).